The sequence spans 340 residues: Ketol-acid reductoisomerase (NADP(+)) (340 aa).

One can recognise a KARI N-terminal Rossmann domain in the interval Met1–Thr182. Residues Tyr24–Gln27, Arg48, Ser51, Ser53, and Asp83–Gln86 each bind NADP(+). The active site involves His108. Gly134 is an NADP(+) binding site. The region spanning Asn183 to Ile329 is the KARI C-terminal knotted domain. Asp191, Glu195, Glu227, and Glu231 together coordinate Mg(2+). Residue Ser252 participates in substrate binding.

Belongs to the ketol-acid reductoisomerase family. Mg(2+) is required as a cofactor.

It catalyses the reaction (2R)-2,3-dihydroxy-3-methylbutanoate + NADP(+) = (2S)-2-acetolactate + NADPH + H(+). The enzyme catalyses (2R,3R)-2,3-dihydroxy-3-methylpentanoate + NADP(+) = (S)-2-ethyl-2-hydroxy-3-oxobutanoate + NADPH + H(+). It functions in the pathway amino-acid biosynthesis; L-isoleucine biosynthesis; L-isoleucine from 2-oxobutanoate: step 2/4. Its pathway is amino-acid biosynthesis; L-valine biosynthesis; L-valine from pyruvate: step 2/4. Involved in the biosynthesis of branched-chain amino acids (BCAA). Catalyzes an alkyl-migration followed by a ketol-acid reduction of (S)-2-acetolactate (S2AL) to yield (R)-2,3-dihydroxy-isovalerate. In the isomerase reaction, S2AL is rearranged via a Mg-dependent methyl migration to produce 3-hydroxy-3-methyl-2-ketobutyrate (HMKB). In the reductase reaction, this 2-ketoacid undergoes a metal-dependent reduction by NADPH to yield (R)-2,3-dihydroxy-isovalerate. In Cereibacter sphaeroides (strain ATCC 17029 / ATH 2.4.9) (Rhodobacter sphaeroides), this protein is Ketol-acid reductoisomerase (NADP(+)).